The sequence spans 356 residues: UDP-N-acetylglucosamine--N-acetylmuramyl-(pentapeptide) pyrophosphoryl-undecaprenol N-acetylglucosamine transferase (356 aa).

Residues 12-14, asparagine 124, arginine 163, serine 188, isoleucine 242, 261-266, and glutamine 287 contribute to the UDP-N-acetyl-alpha-D-glucosamine site; these read TGG and ALTVSE.

Belongs to the glycosyltransferase 28 family. MurG subfamily.

It is found in the cell inner membrane. It catalyses the reaction di-trans,octa-cis-undecaprenyl diphospho-N-acetyl-alpha-D-muramoyl-L-alanyl-D-glutamyl-meso-2,6-diaminopimeloyl-D-alanyl-D-alanine + UDP-N-acetyl-alpha-D-glucosamine = di-trans,octa-cis-undecaprenyl diphospho-[N-acetyl-alpha-D-glucosaminyl-(1-&gt;4)]-N-acetyl-alpha-D-muramoyl-L-alanyl-D-glutamyl-meso-2,6-diaminopimeloyl-D-alanyl-D-alanine + UDP + H(+). Its pathway is cell wall biogenesis; peptidoglycan biosynthesis. Functionally, cell wall formation. Catalyzes the transfer of a GlcNAc subunit on undecaprenyl-pyrophosphoryl-MurNAc-pentapeptide (lipid intermediate I) to form undecaprenyl-pyrophosphoryl-MurNAc-(pentapeptide)GlcNAc (lipid intermediate II). The polypeptide is UDP-N-acetylglucosamine--N-acetylmuramyl-(pentapeptide) pyrophosphoryl-undecaprenol N-acetylglucosamine transferase (Pseudomonas fluorescens (strain SBW25)).